The primary structure comprises 345 residues: Biotin synthase (345 aa).

Residues 66-291 enclose the Radical SAM core domain; that stretch reads PEVEVEGIIS…RTMLRFAGGR (226 aa). 3 residues coordinate [4Fe-4S] cluster: Cys81, Cys85, and Cys88. Cys124, Cys157, Cys216, and Arg286 together coordinate [2Fe-2S] cluster.

This sequence belongs to the radical SAM superfamily. Biotin synthase family. As to quaternary structure, homodimer. [4Fe-4S] cluster serves as cofactor. Requires [2Fe-2S] cluster as cofactor.

It carries out the reaction (4R,5S)-dethiobiotin + (sulfur carrier)-SH + 2 reduced [2Fe-2S]-[ferredoxin] + 2 S-adenosyl-L-methionine = (sulfur carrier)-H + biotin + 2 5'-deoxyadenosine + 2 L-methionine + 2 oxidized [2Fe-2S]-[ferredoxin]. It functions in the pathway cofactor biosynthesis; biotin biosynthesis; biotin from 7,8-diaminononanoate: step 2/2. Catalyzes the conversion of dethiobiotin (DTB) to biotin by the insertion of a sulfur atom into dethiobiotin via a radical-based mechanism. This chain is Biotin synthase, found in Mycobacterium avium (strain 104).